Consider the following 466-residue polypeptide: Vimentin (466 aa).

Composition is skewed to low complexity over residues 1 to 13 (MSTR…SYRR) and 20 to 33 (TSSR…YVTT). The segment at 1–33 (MSTRSVSSSSYRRMFGGSGTSSRPSSNRSYVTT) is disordered. S2 bears the N-acetylserine mark. Residues 2–95 (STRSVSSSSY…FSLADAINTE (94 aa)) are head. Position 5 is a phosphoserine (S5). S7 carries the post-translational modification Phosphoserine; by PKA and PKC; alternate. S7 carries an O-linked (GlcNAc) serine; alternate glycan. S8 carries the phosphoserine modification. Residues S9 and S10 each carry the phosphoserine; by PKC modification. At T20 the chain carries Phosphothreonine. Phosphoserine occurs at positions 25 and 26. T33 carries O-linked (GlcNAc) threonine glycosylation. S34 carries O-linked (GlcNAc) serine; alternate glycosylation. S34 bears the Phosphoserine; by PKC; alternate mark. At S39 the chain carries Phosphoserine; by CaMK2, PKA, PKC and ROCK2. S42 is modified (phosphoserine; by PKC). Phosphoserine; by PKA is present on S47. Phosphoserine is present on residues S49 and S51. Residue Y53 is modified to Phosphotyrosine. S55 and S56 each carry phosphoserine. Y61 is modified (phosphotyrosine). At S66 the chain carries Phosphoserine; by PKA and PKC. Residue S72 is modified to Phosphoserine; by AURKB and ROCK2. Phosphoserine is present on residues S73, S83, and S87. The interval 96–131 (FKNTRTNEKVELQELNDRFANYIDKVRFLEQQNKIL) is coil 1A. The stretch at 96–131 (FKNTRTNEKVELQELNDRFANYIDKVRFLEQQNKIL) forms a coiled coil. In terms of domain architecture, IF rod spans 103-411 (EKVELQELND…KLLEGEESRI (309 aa)). K104 is covalently cross-linked (Glycyl lysine isopeptide (Lys-Gly) (interchain with G-Cter in SUMO2)). Y117 is modified (phosphotyrosine). Residues K120, K129, and K139 each carry the N6-acetyllysine; alternate modification. 2 positions are modified to N6-succinyllysine; alternate: K120 and K129. Residues K120, K129, and K139 each participate in a glycyl lysine isopeptide (Lys-Gly) (interchain with G-Cter in SUMO2); alternate cross-link. A linker 1 region spans residues 132–153 (LAELEQLKGQGKSRLGDLYEEE). S144 is subject to Phosphoserine. The stretch at 154 to 245 (MRELRRQVDQ…KLHDEEIQEL (92 aa)) forms a coiled coil. The tract at residues 154-245 (MRELRRQVDQ…KLHDEEIQEL (92 aa)) is coil 1B. K168 bears the N6-acetyllysine mark. An N6-acetyllysine; alternate modification is found at K188. K188 is modified (N6-succinyllysine; alternate). Residue S214 is modified to Phosphoserine. K223 bears the N6-acetyllysine; alternate mark. Residue K223 forms a Glycyl lysine isopeptide (Lys-Gly) (interchain with G-Cter in SUMO2); alternate linkage. The residue at position 226 (S226) is a Phosphoserine. K235 carries the N6-acetyllysine modification. Residues 246–268 (QAQIQEQHVQIDVDVSKPDLTAA) are linker 12. Residue K262 forms a Glycyl lysine isopeptide (Lys-Gly) (interchain with G-Cter in SUMO2) linkage. The coil 2 stretch occupies residues 269-407 (LRDVRQQYES…ATYRKLLEGE (139 aa)). K294 bears the N6-acetyllysine; alternate mark. K294 is subject to N6-succinyllysine; alternate. K294 participates in a covalent cross-link: Glycyl lysine isopeptide (Lys-Gly) (interchain with G-Cter in SUMO2); alternate. Position 299 is a phosphoserine (S299). Residues 303 to 407 (NRNNDALRQA…ATYRKLLEGE (105 aa)) are a coiled coil. Residue K313 forms a Glycyl lysine isopeptide (Lys-Gly) (interchain with G-Cter in SUMO2) linkage. S325 is modified (phosphoserine). Residues 326-329 (LTCE) carry the [IL]-x-C-x-x-[DE] motif motif. Position 373 is an N6-acetyllysine; alternate (K373). K373 is covalently cross-linked (Glycyl lysine isopeptide (Lys-Gly) (interchain with G-Cter in SUMO2); alternate). Residues 408 to 466 (ESRISLPLPNFSSLNLRETNLESLPLVDTHSKRTLLIKTVETRDGQVINETSQHHDDLE) form a tail region. S409, S412, S419, and S420 each carry phosphoserine. Residue T426 is modified to Phosphothreonine. Residue S430 is modified to Phosphoserine. T436 carries the phosphothreonine modification. At S438 the chain carries Phosphoserine. K439 participates in a covalent cross-link: Glycyl lysine isopeptide (Lys-Gly) (interchain with G-Cter in SUMO2). K445 carries the N6-acetyllysine; alternate modification. K445 carries the N6-succinyllysine; alternate modification. A Glycyl lysine isopeptide (Lys-Gly) (interchain with G-Cter in SUMO2); alternate cross-link involves residue K445. K445 participates in a covalent cross-link: Glycyl lysine isopeptide (Lys-Gly) (interchain with G-Cter in SUMO1); alternate. Phosphothreonine occurs at positions 446 and 458. Phosphoserine is present on S459.

It belongs to the intermediate filament family. As to quaternary structure, homomer assembled from elementary dimers. Identified in complexes that contain VIM, EZR, AHNAK, BFSP1, BFSP2, ANK2, PLEC, PRX and spectrin. Interacts with BCAS3. Interacts with LGSN. Interacts with SYNM. Interacts (via rod region) with PLEC (via CH 1 domain). Interacts with STK33. Interacts with LARP6. Interacts with RAB8B. Interacts with TOR1A; the interaction associates TOR1A with the cytoskeleton. Interacts with TOR1AIP1. Interacts with TOR1AIP1. Interacts with DIAPH1. Interacts with EPPK1; interaction is dependent of higher-order structure of intermediate filament. Interacts with the non-receptor tyrosine kinase SRMS; the interaction leads to phosphorylation of VIM. Interacts with NOD2. Interacts (via head region) with CORO1C. Interacts with HDGF. Interacts with PRKCE (via phorbol-ester/DAG-type 2 domain). Interacts with BFSP2. Interacts with PPL. Interacts with PKP1 and PKP2. Interacts with SCRIB (via PDZ domains); the interaction protects SCRIB from proteasomal degradation and facilitates SCRIB localization to intermediate filaments, the interaction is reduced by cell contact inhibition. In terms of processing, one of the most prominent phosphoproteins in various cells of mesenchymal origin. Phosphorylation is enhanced during cell division, at which time vimentin filaments are significantly reorganized. Phosphorylation by PKN1 inhibits the formation of filaments. Filament disassembly during mitosis is promoted by phosphorylation at Ser-55 as well as by nestin. Phosphorylated at Ser-56 by CDK5 during neutrophil secretion in the cytoplasm. Phosphorylated by STK33. Phosphorylated on tyrosine residues by SRMS. Post-translationally, S-nitrosylation is induced by interferon-gamma and oxidatively-modified low-densitity lipoprotein (LDL(ox)) possibly implicating the iNOS-S100A8/9 transnitrosylase complex.

The protein localises to the cytoplasm. It localises to the cytoskeleton. Its subcellular location is the nucleus matrix. It is found in the cell membrane. Functionally, vimentins are class-III intermediate filaments found in various non-epithelial cells, especially mesenchymal cells. Vimentin is attached to the nucleus, endoplasmic reticulum, and mitochondria, either laterally or terminally. Plays a role in cell directional movement, orientation, cell sheet organization and Golgi complex polarization at the cell migration front. Protects SCRIB from proteasomal degradation and facilitates its localization to intermediate filaments in a cell contact-mediated manner. In terms of biological role, involved with LARP6 in the stabilization of type I collagen mRNAs for CO1A1 and CO1A2. In Rattus norvegicus (Rat), this protein is Vimentin.